We begin with the raw amino-acid sequence, 282 residues long: Bifunctional protein FolD (282 aa).

NADP(+)-binding positions include 165 to 167, T192, and V233; that span reads GRG.

Belongs to the tetrahydrofolate dehydrogenase/cyclohydrolase family. As to quaternary structure, homodimer.

The catalysed reaction is (6R)-5,10-methylene-5,6,7,8-tetrahydrofolate + NADP(+) = (6R)-5,10-methenyltetrahydrofolate + NADPH. It catalyses the reaction (6R)-5,10-methenyltetrahydrofolate + H2O = (6R)-10-formyltetrahydrofolate + H(+). Its pathway is one-carbon metabolism; tetrahydrofolate interconversion. Catalyzes the oxidation of 5,10-methylenetetrahydrofolate to 5,10-methenyltetrahydrofolate and then the hydrolysis of 5,10-methenyltetrahydrofolate to 10-formyltetrahydrofolate. The protein is Bifunctional protein FolD of Mycobacterium leprae (strain Br4923).